We begin with the raw amino-acid sequence, 504 residues long: MRKRALISVYDKTGILDFAKFLVSKGIEIISTGGTYKYLKENNIEVIEVSKITNFEEMLDGRVKTLHPNIHGGILALRDNEEHMRTLKERNIDTIDYVIVNLYPFFEKVKEDLSFEEKIEFIDIGGPTMLRSAAKSFKNVVVISDVKDYESIKEEINKSDDVSYEARKKLAGKVFNLTSAYDAAISQFLLDEDFSEYLNISYKKFMEMRYGENSHQKAAYYTDNMTDGAMKDFKQLNGKELSYNNIRDMDLAWKVVSEFDEICCCAVKHSTPCGVALGDNVEGAYKKAYETDPVSIFGGIVAFNREVDEATAKLLNEIFLEIIIAPSFSKAALEILTKKKNIRLIECKNKPSDKKELIKVDGGILIQDTNNKLYEDLEVVTKAKPTSQEEKDLIFALKVVKFVKSNAIVVAKNLQTLGIGGGEVSRIWAAEKALERAKERFNATDVVLSSDAFFPFKDVIELAAKNGVKAIIQPSGSVNDKDSIEECDRNNISMIFSKLRHFKH.

One can recognise an MGS-like domain in the interval 1–144 (MRKRALISVY…KSFKNVVVIS (144 aa)).

This sequence belongs to the PurH family.

It carries out the reaction (6R)-10-formyltetrahydrofolate + 5-amino-1-(5-phospho-beta-D-ribosyl)imidazole-4-carboxamide = 5-formamido-1-(5-phospho-D-ribosyl)imidazole-4-carboxamide + (6S)-5,6,7,8-tetrahydrofolate. It catalyses the reaction IMP + H2O = 5-formamido-1-(5-phospho-D-ribosyl)imidazole-4-carboxamide. It functions in the pathway purine metabolism; IMP biosynthesis via de novo pathway; 5-formamido-1-(5-phospho-D-ribosyl)imidazole-4-carboxamide from 5-amino-1-(5-phospho-D-ribosyl)imidazole-4-carboxamide (10-formyl THF route): step 1/1. Its pathway is purine metabolism; IMP biosynthesis via de novo pathway; IMP from 5-formamido-1-(5-phospho-D-ribosyl)imidazole-4-carboxamide: step 1/1. This Fusobacterium nucleatum subsp. nucleatum (strain ATCC 25586 / DSM 15643 / BCRC 10681 / CIP 101130 / JCM 8532 / KCTC 2640 / LMG 13131 / VPI 4355) protein is Bifunctional purine biosynthesis protein PurH.